The primary structure comprises 92 residues: RNA-binding protein Hfq (92 aa).

Residues 10–71 (DLFLNQLRKE…ISSIMPSKPI (62 aa)) enclose the Sm domain. The tract at residues 73-92 (YMAQAQNNQQASQQSNNNQG) is disordered. The span at 75 to 92 (AQAQNNQQASQQSNNNQG) shows a compositional bias: low complexity.

The protein belongs to the Hfq family. In terms of assembly, homohexamer.

Functionally, RNA chaperone that binds small regulatory RNA (sRNAs) and mRNAs to facilitate mRNA translational regulation in response to envelope stress, environmental stress and changes in metabolite concentrations. Also binds with high specificity to tRNAs. The sequence is that of RNA-binding protein Hfq from Caldicellulosiruptor bescii (strain ATCC BAA-1888 / DSM 6725 / KCTC 15123 / Z-1320) (Anaerocellum thermophilum).